Consider the following 559-residue polypeptide: Tissue-type plasminogen activator (559 aa).

The first 17 residues, 1–17 (MKRELLCVLLLCGLAFP), serve as a signal peptide directing secretion. Residues 18 to 29 (LPDQGIHGRFRR) constitute a propeptide that is removed on maturation. Positions 30-32 (GAR) are cleaved as a propeptide — removed by plasmin. The region spanning 36–78 (ATCRDEPTQTTYQQHQSWLRPMLRSSRVEYCRCNSGLVQCHSV) is the Fibronectin type-I domain. Intrachain disulfides connect Cys-38–Cys-68, Cys-66–Cys-75, Cys-83–Cys-94, Cys-88–Cys-105, Cys-107–Cys-116, Cys-124–Cys-205, Cys-145–Cys-187, Cys-176–Cys-200, Cys-213–Cys-294, Cys-234–Cys-276, Cys-265–Cys-289, Cys-297–Cys-428, Cys-340–Cys-356, Cys-348–Cys-417, Cys-442–Cys-516, Cys-474–Cys-490, and Cys-506–Cys-534. The segment at 39 to 49 (RDEPTQTTYQQ) is important for binding to annexin A2. The 39-residue stretch at 79 to 117 (PVRSCSEPRCFNGGTCQQALYFSDFVCQCPDGFVGKRCD) folds into the EGF-like domain. 2 Kringle domains span residues 124 to 205 (CFEE…TPAC) and 213 to 294 (CYVG…MSPC). The N-linked (GlcNAc...) asparagine glycan is linked to Asn-149. The 250-residue stretch at 309 to 558 (IKGGLYTDIT…YLDWIHDNMK (250 aa)) folds into the Peptidase S1 domain. Catalysis depends on charge relay system residues His-355 and Asp-404. A glycan (N-linked (GlcNAc...) asparagine) is linked at Asn-481. Ser-510 acts as the Charge relay system in catalysis.

The protein belongs to the peptidase S1 family. As to quaternary structure, heterodimer of chain A and chain B held by a disulfide bond. Binds to fibrin with high affinity. This interaction leads to an increase in the catalytic efficiency of the enzyme due to an increase in affinity for plasminogen. Similarly, binding to heparin increases the activation of plasminogen. Binds to annexin A2, cytokeratin-8, fibronectin and laminin. Binds to mannose receptor and the low-density lipoprotein receptor-related protein (LRP1); these proteins are involved in TPA clearance. Binds LRP1B; binding is followed by internalization and degradation. Forms heterodimer with SERPINA5. Interacts with SERPINE1. In complex with SERPINE1, interacts with SORL1. In terms of processing, the single chain, almost fully active enzyme, can be further processed into a two-chain fully active form by a cleavage after Arg-308 catalyzed by plasmin, tissue kallikrein or factor Xa.

The protein resides in the secreted. The protein localises to the extracellular space. It carries out the reaction Specific cleavage of Arg-|-Val bond in plasminogen to form plasmin.. With respect to regulation, inhibited by SERPINA5. Inhibited by SERPINE1. Functionally, converts the abundant, but inactive, zymogen plasminogen to plasmin by hydrolyzing a single Arg-Val bond in plasminogen. By controlling plasmin-mediated proteolysis, it plays an important role in tissue remodeling and degradation, in cell migration and many other physiopathological events. During oocyte activation, plays a role in cortical granule reaction in the zona reaction, which contributes to the block to polyspermy. The polypeptide is Tissue-type plasminogen activator (Plat) (Mus musculus (Mouse)).